The primary structure comprises 140 residues: Small ribosomal subunit protein uS12 (140 aa).

The tract at residues 33-55 is disordered; the sequence is KEQTNVSSPQKRGVCTRVGTMTP. A 3-methylthioaspartic acid modification is found at D102.

This sequence belongs to the universal ribosomal protein uS12 family. Part of the 30S ribosomal subunit. Contacts proteins S8 and S17. May interact with IF1 in the 30S initiation complex.

In terms of biological role, with S4 and S5 plays an important role in translational accuracy. Functionally, interacts with and stabilizes bases of the 16S rRNA that are involved in tRNA selection in the A site and with the mRNA backbone. Located at the interface of the 30S and 50S subunits, it traverses the body of the 30S subunit contacting proteins on the other side and probably holding the rRNA structure together. The combined cluster of proteins S8, S12 and S17 appears to hold together the shoulder and platform of the 30S subunit. The chain is Small ribosomal subunit protein uS12 from Geobacillus thermodenitrificans (strain NG80-2).